Reading from the N-terminus, the 138-residue chain is ATP synthase epsilon chain (138 aa).

This sequence belongs to the ATPase epsilon chain family. In terms of assembly, F-type ATPases have 2 components, CF(1) - the catalytic core - and CF(0) - the membrane proton channel. CF(1) has five subunits: alpha(3), beta(3), gamma(1), delta(1), epsilon(1). CF(0) has three main subunits: a, b and c.

It localises to the cell membrane. Its function is as follows. Produces ATP from ADP in the presence of a proton gradient across the membrane. This is ATP synthase epsilon chain from Caldanaerobacter subterraneus subsp. tengcongensis (strain DSM 15242 / JCM 11007 / NBRC 100824 / MB4) (Thermoanaerobacter tengcongensis).